The primary structure comprises 298 residues: Rhodopsin (298 aa).

The Extracellular portion of the chain corresponds to 1–15 (IHLHWYEYPPMNPMM). The helical transmembrane segment at 16-40 (YPLLLIFMLFTGILCLAGNFVTIWV) threads the bilayer. Residues 41–52 (FMNTKSLRTPAN) lie on the Cytoplasmic side of the membrane. A helical membrane pass occupies residues 53-75 (LLVVNLAMSDFLMMFTMFPPMMV). Residues 76–89 (TCYYHTWTLGPTFC) lie on the Extracellular side of the membrane. Cysteines 89 and 166 form a disulfide. A helical membrane pass occupies residues 90 to 112 (QVYAFLGNLCGCASIWTMVFITF). A 'Ionic lock' involved in activated form stabilization motif is present at residues 113-115 (DRY). Over 113-131 (DRYNVIVKGVAGEPLSTKK) the chain is Cytoplasmic. The helical transmembrane segment at 132 to 152 (ASLWILTIWVLSTTWCMAPFF) threads the bilayer. Residues 153–179 (GWNHYVPEGNLTGCGTDYLSEDILSRS) lie on the Extracellular side of the membrane. An N-linked (GlcNAc...) asparagine glycan is attached at Asn-162. The helical transmembrane segment at 180 to 201 (YLYVYSTWVYFLPLAITIYCYV) threads the bilayer. The Cytoplasmic segment spans residues 202-242 (FIIKAVAAHEKGMRDQAKKMGIKSLRNEEAQKTSAECRLAK). The chain crosses the membrane as a helical span at residues 243–264 (IAMTTVALWFIAWTPYLLINWV). At 265–275 (GMFARSYLSPV) the chain is on the extracellular side. The chain crosses the membrane as a helical span at residues 276–297 (YTIWGYVFAKANAVYNPIVYAI). An N6-(retinylidene)lysine modification is found at Lys-285.

The protein belongs to the G-protein coupled receptor 1 family. Opsin subfamily. Homodimer. Interacts with GNAQ. In terms of processing, contains one covalently linked retinal chromophore.

Its subcellular location is the cell projection. The protein localises to the rhabdomere membrane. Functionally, photoreceptor required for image-forming vision at low light intensity. Can use both retinal and 3-dehydroretinal as visual pigment. Light-induced isomerization of 11-cis to all-trans retinal triggers a conformational change that activates signaling via G-proteins. Signaling via GNAQ probably mediates the activation of phospholipase C. The sequence is that of Rhodopsin (RHO) from Procambarus orcinus (Crayfish).